We begin with the raw amino-acid sequence, 210 residues long: Small ribosomal subunit protein uS7 (210 aa).

Residues 1-22 (MSDEQPAEDETEEAAAESEDTQ) are compositionally biased toward acidic residues. Positions 1–23 (MSDEQPAEDETEEAAAESEDTQE) are disordered.

This sequence belongs to the universal ribosomal protein uS7 family. As to quaternary structure, part of the 30S ribosomal subunit. Contacts proteins S9 and S11.

Its function is as follows. One of the primary rRNA binding proteins, it binds directly to 16S rRNA where it nucleates assembly of the head domain of the 30S subunit. Is located at the subunit interface close to the decoding center. The sequence is that of Small ribosomal subunit protein uS7 from Halobacterium salinarum (strain ATCC 29341 / DSM 671 / R1).